The sequence spans 418 residues: 3-isopropylmalate dehydratase large subunit (418 aa).

The [4Fe-4S] cluster site is built by cysteine 299, cysteine 359, and cysteine 362.

The protein belongs to the aconitase/IPM isomerase family. LeuC type 2 subfamily. In terms of assembly, heterodimer of LeuC and LeuD. It depends on [4Fe-4S] cluster as a cofactor.

It carries out the reaction (2R,3S)-3-isopropylmalate = (2S)-2-isopropylmalate. It participates in amino-acid biosynthesis; L-leucine biosynthesis; L-leucine from 3-methyl-2-oxobutanoate: step 2/4. Functionally, catalyzes the isomerization between 2-isopropylmalate and 3-isopropylmalate, via the formation of 2-isopropylmaleate. This chain is 3-isopropylmalate dehydratase large subunit, found in Oleidesulfovibrio alaskensis (strain ATCC BAA-1058 / DSM 17464 / G20) (Desulfovibrio alaskensis).